Reading from the N-terminus, the 196-residue chain is Pro-FMRFamide-related neuropeptide VF (196 aa).

The N-terminal stretch at methionine 1 to threonine 21 is a signal peptide. The propeptide occupies serine 22–arginine 57. Phenylalanine 92 is modified (phenylalanine amide). 2 propeptides span residues asparagine 95–glutamate 99 and asparagine 115–serine 121. Phenylalanine amide is present on phenylalanine 131. Positions threonine 134–lysine 196 are excised as a propeptide.

This sequence belongs to the FARP (FMRFamide related peptide) family. In terms of tissue distribution, expressed in hypothalamus, where it is localized to the dorsomedial hypothalamic nucleus (DMH), paraventricular nucleus (PVN), and to neuronal projections from the PVN to the neurosecretory zone of the median eminence.

Its subcellular location is the secreted. Functionally, may act in concert with kisspeptin, through opposing affects, to regulate the activity of gonadotropin-releasing hormone (GnRH) neurons across the seasons, leading to an annual change in fertility and the cyclical seasonal transition from non-breeding to breeding season. In terms of biological role, efficiently inhibits forskolin-induced production of cAMP. Acts as a potent negative regulator of gonadotropin synthesis and secretion. Induces secretion of prolactin. Its function is as follows. Efficiently inhibits forskolin-induced production of cAMP. Blocks morphine-induced analgesia. Shows no inhibitory activity of forskolin-induced production of cAMP. The sequence is that of Pro-FMRFamide-related neuropeptide VF from Ovis aries (Sheep).